A 151-amino-acid chain; its full sequence is Nucleoside diphosphate kinase (151 aa).

Positions 11, 59, 87, 93, 104, and 114 each coordinate ATP. His117 serves as the catalytic Pros-phosphohistidine intermediate.

It belongs to the NDK family. The cofactor is Mg(2+).

The catalysed reaction is a 2'-deoxyribonucleoside 5'-diphosphate + ATP = a 2'-deoxyribonucleoside 5'-triphosphate + ADP. It carries out the reaction a ribonucleoside 5'-diphosphate + ATP = a ribonucleoside 5'-triphosphate + ADP. Functionally, major role in the synthesis of nucleoside triphosphates other than ATP. The ATP gamma phosphate is transferred to the NDP beta phosphate via a ping-pong mechanism, using a phosphorylated active-site intermediate. The protein is Nucleoside diphosphate kinase (NDK1) of Eremothecium gossypii (strain ATCC 10895 / CBS 109.51 / FGSC 9923 / NRRL Y-1056) (Yeast).